The following is a 242-amino-acid chain: MHQLSTSICLCFVISSPYVYLVSIACVLWTSIPFTSGMMDHSAMHHSGMDMDHGHGDMDMGGQCNMNMLFTWSTKDLCIVFSQWHITGPFSLLMSLIVIVLLTAGYEGVRQATRKYEAAQAQRLNVFSTTTATIARLKPSLTNGVQGNEFADESATTNVPSSQTPNESSPLVAGRDNRRAVEQRGKIILAALYAVQVFYSFFIMLLFMTYNGFVMLAVAVGAFAGYLVFGDNQSAAKTVACH.

2 helical membrane-spanning segments follow: residues I8–L28 and I86–Y106. The tract at residues E153–R175 is disordered. The segment covering S154–S169 has biased composition (polar residues). The next 2 helical transmembrane spans lie at I187–F207 and Y210–G230.

The protein belongs to the copper transporter (Ctr) (TC 1.A.56) family. SLC31A subfamily.

The protein resides in the membrane. In terms of biological role, transporter that is probably involved in the transport of copper, even if it does not act as a major copper transporter. The sequence is that of Copper transport protein B from Aspergillus fumigatus (strain ATCC MYA-4609 / CBS 101355 / FGSC A1100 / Af293) (Neosartorya fumigata).